A 355-amino-acid polypeptide reads, in one-letter code: MNQVRKWNIIGGRVIKTGIAVFLTVLVCEFFNIPTIFAVITAIVTIEPTATDSIKKGLVRFPASTIGSAYAMTFTFFLGHQALSYALAAMFTIVTCQKLKLHAGTLVATLTAVAMIPITADHYFTAFLIRLATTSTGIIVSTLVNFFILPPHYVKTISGCTEELFVKTAHIMEEWLNALIEGKVITKETTHNLSKVNLLLHKAVQFVQYEQKDWKYHRHTKKEMRSFLLVQKQLHLLQQIIYHIDNLARTPIETCDWSQNEKEILRRTIHSIISILRNNCNKIDEEHFKLIDELDKQFWNYKNDLAHCKPNQYHHHFSSESIILFEVLSIHDMLEELKQIXEKYEGENQFNCSVH.

The next 4 helical transmembrane spans lie at 19–39, 74–94, 109–129, and 131–151; these read IAVFLTVLVCEFFNIPTIFAV, FTFFLGHQALSYALAAMFTIV, TLTAVAMIPITADHYFTAFLI, and LATTSTGIIVSTLVNFFILPP.

The protein belongs to the UPF0421 family.

The protein localises to the cell membrane. This chain is UPF0421 protein BCE_2776, found in Bacillus cereus (strain ATCC 10987 / NRS 248).